A 407-amino-acid chain; its full sequence is Nuclear hormone receptor family member nhr-86 (407 aa).

The segment at residues 21–96 (KSTCSICRED…VGMNPAGVQQ (76 aa)) is a DNA-binding region (nuclear receptor). NR C4-type zinc fingers lie at residues 24 to 44 (CSIC…CRAC) and 60 to 79 (CRGN…CRSC). The 276-residue stretch at 130–405 (AQSALVEDLH…KDFYDLVNGK (276 aa)) folds into the NR LBD domain. Positions 394–405 (PPKDFYDLVNGK) are AF-2.

It belongs to the nuclear hormone receptor family. As to expression, expressed in intestinal epithelial cells, excretory gland cells and in several head neurons.

The protein resides in the nucleus. Functionally, nuclear receptor which acts as a transcription activator. Binds small molecule ligands, such as phenazine 1-carboxamide (PCN), a pathogen-derived metabolite, leading to modulation of innate immune responses against virulent pathogens. On exposure to exogenous PCN, P.aeruginosa and other xenobiotic immunostimulant such as R24, activates immune response genes, including irg-4, irg-5, mul-1, drd-50, cyp-35C1 and ugt-30, probably via direct interaction with their promoters, and independent of the p38 MAPK pmk-1 pathway. Exhibits higher affinity to R24 than PCN and thus induces stronger immune response. Binds its own promoter thereby autoregulating its expression in the head hypodermis and the pharynx. Possibly plays a role in lipid storage or catabolism. This Caenorhabditis elegans protein is Nuclear hormone receptor family member nhr-86 (nhr-86).